The chain runs to 623 residues: Chaperone protein HtpG (623 aa).

Residues 1-336 form an a; substrate-binding region; sequence MSETNTQKAA…TEDLPLNVSR (336 aa). The tract at residues 337–546 is b; it reads EMLQATPVLA…DGGPDLTMQR (210 aa). Residues 547–623 form a c region; the sequence is LMRRSGQAMP…ATLLAGPAAE (77 aa).

It belongs to the heat shock protein 90 family. In terms of assembly, homodimer.

It localises to the cytoplasm. Molecular chaperone. Has ATPase activity. The polypeptide is Chaperone protein HtpG (Gluconobacter oxydans (strain 621H) (Gluconobacter suboxydans)).